A 180-amino-acid chain; its full sequence is Cytochrome b6-f complex iron-sulfur subunit 2 (180 aa).

A helical membrane pass occupies residues 21–43 (LLTFGTITGVAAGALYPAVKYLI). The 97-residue stretch at 66-162 (VTEFLASHNA…ATVTDDDKLV (97 aa)) folds into the Rieske domain. Positions 108, 110, 126, and 129 each coordinate [2Fe-2S] cluster. Cysteines 113 and 128 form a disulfide.

The protein belongs to the Rieske iron-sulfur protein family. In terms of assembly, the 4 large subunits of the cytochrome b6-f complex are cytochrome b6, subunit IV (17 kDa polypeptide, PetD), cytochrome f and the Rieske protein, while the 4 small subunits are PetG, PetL, PetM and PetN. The complex functions as a dimer. Requires [2Fe-2S] cluster as cofactor.

The protein resides in the cellular thylakoid membrane. It carries out the reaction 2 oxidized [plastocyanin] + a plastoquinol + 2 H(+)(in) = 2 reduced [plastocyanin] + a plastoquinone + 4 H(+)(out). In terms of biological role, component of the cytochrome b6-f complex, which mediates electron transfer between photosystem II (PSII) and photosystem I (PSI), cyclic electron flow around PSI, and state transitions. The protein is Cytochrome b6-f complex iron-sulfur subunit 2 of Synechocystis sp. (strain ATCC 27184 / PCC 6803 / Kazusa).